The primary structure comprises 268 residues: 4-hydroxy-tetrahydrodipicolinate reductase (268 aa).

NAD(+) is bound at residue 8 to 13; it reads GAAGRM. Arg-36 contacts NADP(+). NAD(+) is bound by residues 99 to 101 and 123 to 126; these read GTT and AANF. His-156 functions as the Proton donor/acceptor in the catalytic mechanism. His-157 serves as a coordination point for (S)-2,3,4,5-tetrahydrodipicolinate. Lys-160 (proton donor) is an active-site residue. 166–167 contributes to the (S)-2,3,4,5-tetrahydrodipicolinate binding site; the sequence is GT.

It belongs to the DapB family.

The protein localises to the cytoplasm. It carries out the reaction (S)-2,3,4,5-tetrahydrodipicolinate + NAD(+) + H2O = (2S,4S)-4-hydroxy-2,3,4,5-tetrahydrodipicolinate + NADH + H(+). It catalyses the reaction (S)-2,3,4,5-tetrahydrodipicolinate + NADP(+) + H2O = (2S,4S)-4-hydroxy-2,3,4,5-tetrahydrodipicolinate + NADPH + H(+). The protein operates within amino-acid biosynthesis; L-lysine biosynthesis via DAP pathway; (S)-tetrahydrodipicolinate from L-aspartate: step 4/4. In terms of biological role, catalyzes the conversion of 4-hydroxy-tetrahydrodipicolinate (HTPA) to tetrahydrodipicolinate. In Pseudomonas fluorescens (strain Pf0-1), this protein is 4-hydroxy-tetrahydrodipicolinate reductase.